The primary structure comprises 535 residues: Phosphoenolpyruvate carboxykinase (ATP) (535 aa).

Residues Arg59, Tyr201, and Lys207 each coordinate substrate. ATP contacts are provided by residues Lys207, His226, and 243-251 (GLSGTGKTT). 2 residues coordinate Mn(2+): Lys207 and His226. Asp264 contributes to the Mn(2+) binding site. Residues Glu292, Arg328, 444–445 (RI), and Thr450 each bind ATP. Residue Arg328 participates in substrate binding.

It belongs to the phosphoenolpyruvate carboxykinase (ATP) family. Requires Mn(2+) as cofactor.

The protein resides in the cytoplasm. The catalysed reaction is oxaloacetate + ATP = phosphoenolpyruvate + ADP + CO2. Its pathway is carbohydrate biosynthesis; gluconeogenesis. Involved in the gluconeogenesis. Catalyzes the conversion of oxaloacetate (OAA) to phosphoenolpyruvate (PEP) through direct phosphoryl transfer between the nucleoside triphosphate and OAA. In Parabacteroides distasonis (strain ATCC 8503 / DSM 20701 / CIP 104284 / JCM 5825 / NCTC 11152), this protein is Phosphoenolpyruvate carboxykinase (ATP).